A 461-amino-acid chain; its full sequence is Deoxyhypusine synthase (461 aa).

Residues glutamate 166–histidine 167, glutamate 331, histidine 377, glycine 403–aspartate 405, and glutamate 412–lysine 418 contribute to the spermidine site. The active-site Nucleophile is lysine 418. A helical transmembrane segment spans residues valine 428 to valine 448.

It belongs to the deoxyhypusine synthase family. As to quaternary structure, heterotetramer formed by a homodimer of the non-catalytic regulatory subunit DHSp and a homodimer of the catalytic subunit DHSc where DHSc appears to bind spermidine and DHSp appears to bind NAD(+). The cofactor is NAD(+).

The protein localises to the membrane. It carries out the reaction [eIF5A protein]-L-lysine + spermidine = [eIF5A protein]-deoxyhypusine + propane-1,3-diamine. Its pathway is protein modification; eIF5A hypusination. Its activity is regulated as follows. Allosterically activated by DHSp. Inhibited by spermididine analog N1-guanyl-1,7-diamineoheptane (GC7). In association with the non-catalytic regulatory subunit DHSp, catalyzes the NAD-dependent oxidative cleavage of spermidine and the subsequent transfer of the butylamine moiety of spermidine to the epsilon-amino group of a specific lysine residue of the eIF5A precursor protein to form the intermediate deoxyhypusine residue. Regulates protein levels of its regulatory subunit DHSp. Required for cell growth and survival. In Trypanosoma brucei brucei (strain 927/4 GUTat10.1), this protein is Deoxyhypusine synthase.